The following is a 211-amino-acid chain: Transcriptional regulatory protein RcsA (211 aa).

The HTH luxR-type domain occupies 135-200; the sequence is SEVHPFTLSQ…VIYHVVRLTD (66 aa). Positions 159–178 form a DNA-binding region, H-T-H motif; it reads TIQISDKMQIKAKTVSSHKG.

Belongs to the RcsA family.

In terms of biological role, component of the Rcs signaling system, which controls transcription of numerous genes. Binds to DNA to regulate expression of genes. The chain is Transcriptional regulatory protein RcsA from Erwinia amylovora (Fire blight bacteria).